The chain runs to 417 residues: MLKKDMNIADYDPELFNAIQNETLRQEEHIELIASENYTSPRVMQAQGSQLTNKYAEGYPGKRYYGGCEYVDVVETLAIERAKQLFGATYANVQPHSGSQANSAVYMALLKPGDTVLGMNLAHGGHLTHGSPVNFSGRLYNIIPYGIDESGKIDYDEMERLAVEHKPKMMIGGFSAYSGIVDWARMREIADKIGAYLFVDMAHVAGLIAAGVYPNPVPHAHVVTSTTHKTLAGPRGGIILSAADDEELYKKLNSAVFPGGQGGPLMHVIAGKAVAFKEALEPEFKTYQQQVVNNAKAMVEVFLERGYKIVSGGTSNHLMLVDLIGRDLTGKEADAALGSANITVNKNSVPNDPRSPFVTSGVRIGTPAITRRGFKEAEAKQLTGWICDILDDAHNPAVIERVKGQVLALCARFPVYG.

(6S)-5,6,7,8-tetrahydrofolate contacts are provided by residues leucine 121 and 125-127; that span reads GHL. Lysine 229 carries the N6-(pyridoxal phosphate)lysine modification. 355 to 357 contributes to the (6S)-5,6,7,8-tetrahydrofolate binding site; that stretch reads SPF.

This sequence belongs to the SHMT family. In terms of assembly, homodimer. Pyridoxal 5'-phosphate is required as a cofactor.

The protein resides in the cytoplasm. It catalyses the reaction (6R)-5,10-methylene-5,6,7,8-tetrahydrofolate + glycine + H2O = (6S)-5,6,7,8-tetrahydrofolate + L-serine. It participates in one-carbon metabolism; tetrahydrofolate interconversion. Its pathway is amino-acid biosynthesis; glycine biosynthesis; glycine from L-serine: step 1/1. In terms of biological role, catalyzes the reversible interconversion of serine and glycine with tetrahydrofolate (THF) serving as the one-carbon carrier. This reaction serves as the major source of one-carbon groups required for the biosynthesis of purines, thymidylate, methionine, and other important biomolecules. Also exhibits THF-independent aldolase activity toward beta-hydroxyamino acids, producing glycine and aldehydes, via a retro-aldol mechanism. The protein is Serine hydroxymethyltransferase of Shewanella oneidensis (strain ATCC 700550 / JCM 31522 / CIP 106686 / LMG 19005 / NCIMB 14063 / MR-1).